A 66-amino-acid polypeptide reads, in one-letter code: Sarcoplasmic/endoplasmic reticulum calcium ATPase regulator ARLN (66 aa).

Methionine 1 bears the N-acetylmethionine mark. Positions 1–38 (MEVDVPGVDGRDGLRERRGLSEGGRQNLDVRPQSGANG) are disordered. Basic and acidic residues predominate over residues 9 to 20 (DGRDGLRERRGL). A helical transmembrane segment spans residues 45–65 (WLDLWLFIFFDVVVFLFVYFL).

As to quaternary structure, homooligomer. Can also form heterooligomers with other sarcoplasmic/endoplasmic reticulum calcium ATPase (SERCA) regulators ERLN, PLN, SLN and STRIT1/DWORF. Monomer. Interacts as a monomer with ATP2A2/SERCA2; the interaction results in inhibition of ATP2A2 Ca(2+) affinity.

The protein localises to the endoplasmic reticulum membrane. Its function is as follows. Inhibits the activity of the calcium ATPases ATP2A2/SERCA2 and ATP2A3/SERCA3 by decreasing their apparent affinity for Ca(2+). In Pongo abelii (Sumatran orangutan), this protein is Sarcoplasmic/endoplasmic reticulum calcium ATPase regulator ARLN (ARLN).